The chain runs to 455 residues: Serine--tRNA ligase (455 aa).

Residue 252–254 participates in L-serine binding; that stretch reads TAE. ATP-binding positions include 283 to 285 and Val-299; that span reads RKE. Position 306 (Glu-306) interacts with L-serine. Residue 370–373 participates in ATP binding; the sequence is EVVS. Residue Thr-406 participates in L-serine binding.

It belongs to the class-II aminoacyl-tRNA synthetase family. Type-1 seryl-tRNA synthetase subfamily. In terms of assembly, homodimer. The tRNA molecule binds across the dimer.

The protein localises to the cytoplasm. The catalysed reaction is tRNA(Ser) + L-serine + ATP = L-seryl-tRNA(Ser) + AMP + diphosphate + H(+). It carries out the reaction tRNA(Sec) + L-serine + ATP = L-seryl-tRNA(Sec) + AMP + diphosphate + H(+). Its pathway is aminoacyl-tRNA biosynthesis; selenocysteinyl-tRNA(Sec) biosynthesis; L-seryl-tRNA(Sec) from L-serine and tRNA(Sec): step 1/1. Functionally, catalyzes the attachment of serine to tRNA(Ser). Is also able to aminoacylate tRNA(Sec) with serine, to form the misacylated tRNA L-seryl-tRNA(Sec), which will be further converted into selenocysteinyl-tRNA(Sec). The polypeptide is Serine--tRNA ligase (Thermococcus gammatolerans (strain DSM 15229 / JCM 11827 / EJ3)).